We begin with the raw amino-acid sequence, 91 residues long: Small ribosomal subunit protein uS19 (91 aa).

Belongs to the universal ribosomal protein uS19 family.

In terms of biological role, protein S19 forms a complex with S13 that binds strongly to the 16S ribosomal RNA. This is Small ribosomal subunit protein uS19 (rpsS) from Mycoplasmopsis pulmonis (strain UAB CTIP) (Mycoplasma pulmonis).